Here is a 449-residue protein sequence, read N- to C-terminus: UNC93-like protein MFSD11 (449 aa).

A helical membrane pass occupies residues 8 to 28 (LFNIIILGVAFMFMFTAFQTC). Asn40 carries an N-linked (GlcNAc...) asparagine glycan. Helical transmembrane passes span 53 to 73 (AIIY…VAIV), 74 to 94 (GPQL…AVFN), 96 to 116 (PFPW…AVLW), 138 to 158 (IFWA…YFAW), and 170 to 190 (RTVF…FFLI). Ser204 bears the Phosphoserine mark. A run of 6 helical transmembrane segments spans residues 239 to 259 (MLLL…FSGV), 277 to 297 (LIGL…SLFG), 309 to 329 (PVVL…FLNM), 359 to 379 (FLLG…LGFL), 385 to 405 (APAF…AFFY), and 410 to 430 (LLHW…LSFF).

This sequence belongs to the unc-93 family.

It localises to the membrane. This is UNC93-like protein MFSD11 (MFSD11) from Pongo abelii (Sumatran orangutan).